We begin with the raw amino-acid sequence, 478 residues long: Putative multidrug resistance outer membrane protein MdtQ (478 aa).

Positions 1–21 are cleaved as a signal peptide; sequence MNRDSFYPAIACFPLLLMLAG. Residue C22 is the site of N-palmitoyl cysteine attachment. A lipid anchor (S-diacylglycerol cysteine) is attached at C22.

Belongs to the outer membrane factor (OMF) (TC 1.B.17) family.

Its subcellular location is the cell outer membrane. In terms of biological role, could be involved in resistance to puromycin, acriflavine and tetraphenylarsonium chloride. The chain is Putative multidrug resistance outer membrane protein MdtQ (mdtQ) from Shigella flexneri.